The primary structure comprises 76 residues: Signal recognition particle 9 kDa protein (76 aa).

Belongs to the SRP9 family. Heterodimer with SRP14; binds RNA as heterodimer. Component of a signal recognition particle complex that consists of a 7SL RNA molecule of 300 nucleotides and six protein subunits: srpa-72, srpa-68, SRP54, F37F2.2/SRP19, F25G6.8/SRP14 and ZK512.4/SRP9.

The protein resides in the cytoplasm. Component of the signal recognition particle (SRP) complex, a ribonucleoprotein complex that mediates the cotranslational targeting of secretory and membrane proteins to the endoplasmic reticulum (ER). SRP9 together with SRP14 and the Alu portion of the SRP RNA, constitutes the elongation arrest domain of SRP. The complex of SRP9 and SRP14 is required for SRP RNA binding. In Caenorhabditis elegans, this protein is Signal recognition particle 9 kDa protein.